Here is a 255-residue protein sequence, read N- to C-terminus: Venom allergen-1 (255 aa).

Residues 1-21 (MASHVIVKFITAAILIGSCYA) form the signal peptide. In terms of domain architecture, SCP spans 65 to 210 (LKKHNELRAE…VIKYYLVCNY (146 aa)). Asn-146 and Asn-209 each carry an N-linked (GlcNAc...) asparagine glycan.

The protein belongs to the CRISP family. As to quaternary structure, interacts with human LRPPRC; the interaction interrupts association between BECN1 and LRPPRC. Interacts with human CD4. In terms of assembly, (Microbial infection) Interacts with Zika virus envelope protein E and Zika virus-like particles; the interaction does not affect Zika virus replication in human endothelial cells and keratinocytes. Saliva (at protein level). Female salivary gland. No or low-level expression in female hemolymph, midgut, Malpighian tubule system and ovary. No or low-level expression in male tissues.

The protein resides in the secreted. Its subcellular location is the host endosome. It localises to the host mitochondrion. In terms of biological role, activates autophagy in human monocytic cells, dendritic cells and macrophages. Promotes activation of human CD4(+) T-cells. Does not affect cytokine expression in human monocytic cells. (Microbial infection) Promotes dengue virus type 2 replication in human monocytic cells, dendritic cells and macrophages. Pro-viral properties are linked to BECN1-mediated autophagy activation in the host. Does not directly interact with the purified envelope protein of dengue virus type 2. Functionally, (Microbial infection) Promotes Zika virus replication in human monocytic cells, dendritic cells and macrophages. Facilitates Zika virus transmission from infected mosquitoes to the host in mouse model. Pro-viral properties are linked to BECN1-mediated autophagy activation in the host. Does not affect Zika virus replication in human endothelial cells and keratinocytes. Its function is as follows. (Microbial infection) Promotes Semliki Forest virus replication in human monocytic cells. In terms of biological role, (Microbial infection) Does not influence Batai virus replication in human monocytic cells. This chain is Venom allergen-1, found in Aedes aegypti (Yellowfever mosquito).